A 273-amino-acid polypeptide reads, in one-letter code: Large ribosomal subunit protein uL2cz/uL2cy (273 aa).

Disordered stretches follow at residues 1-25 and 225-253; these read MAKHLYKTPIPSTRKGTLDRQVKSN and PVDHPHGGGEGKAPIGRKKPTTPWGYPAL.

The protein belongs to the universal ribosomal protein uL2 family. In terms of assembly, part of the 50S ribosomal subunit.

Its subcellular location is the plastid. It is found in the chloroplast. The sequence is that of Large ribosomal subunit protein uL2cz/uL2cy (rpl2-A) from Triticum aestivum (Wheat).